The following is a 159-amino-acid chain: Phosphopantetheine adenylyltransferase (159 aa).

Position 10 (T10) interacts with substrate. ATP contacts are provided by residues 10–11 (TF) and H18. Substrate is bound by residues K42, M74, and R88. Residues 89-91 (GLR), E99, and 124-130 (WSFISSS) contribute to the ATP site.

It belongs to the bacterial CoaD family. Homohexamer. The cofactor is Mg(2+).

The protein localises to the cytoplasm. The catalysed reaction is (R)-4'-phosphopantetheine + ATP + H(+) = 3'-dephospho-CoA + diphosphate. Its pathway is cofactor biosynthesis; coenzyme A biosynthesis; CoA from (R)-pantothenate: step 4/5. In terms of biological role, reversibly transfers an adenylyl group from ATP to 4'-phosphopantetheine, yielding dephospho-CoA (dPCoA) and pyrophosphate. The sequence is that of Phosphopantetheine adenylyltransferase from Klebsiella pneumoniae (strain 342).